We begin with the raw amino-acid sequence, 351 residues long: Probable galacturonosyltransferase-like 4 (351 aa).

Residues 1 to 8 (MASRSLSY) lie on the Cytoplasmic side of the membrane. A helical; Signal-anchor for type II membrane protein membrane pass occupies residues 9–29 (TQLLGLLSFILLLVTTTTMAV). Topologically, residues 30–351 (RVGVILHKPS…YRSSRHSLEE (322 aa)) are lumenal. Asparagine 96 and asparagine 203 each carry an N-linked (GlcNAc...) asparagine glycan.

The protein belongs to the glycosyltransferase 8 family.

The protein resides in the golgi apparatus membrane. It functions in the pathway glycan metabolism; pectin biosynthesis. May be involved in pectin and/or xylans biosynthesis in cell walls. This is Probable galacturonosyltransferase-like 4 (GATL4) from Arabidopsis thaliana (Mouse-ear cress).